The following is a 228-amino-acid chain: E3 ubiquitin-protein ligase RNF114 (228 aa).

The segment at 29–68 (CPVCLEVYEKPVQVPCGHVFCSACLQECLKPKKPVCGVCR) adopts an RING-type zinc-finger fold. Zn(2+) contacts are provided by C91 and C94. The C2HC RNF-type zinc-finger motif lies at 91–110 (CHGCRKKFFLSKIRSHVATC). K102 carries the N6-acetyllysine modification. Zn(2+) is bound by residues H106 and C110. Position 112 is an N6-acetyllysine (K112).

Interacts with XAF1, the interaction increases XAF1 stability and proapoptotic effects, and may regulate IFN signaling. Post-translationally, autoubiquitinated. Polyubiquitinated in the presence of E2 enzymes UBE2D1, UBE2D2 and UBE2D3, but only monoubiquitinated in the presence of UBE2E1.

It is found in the cytoplasm. It localises to the nucleus. It carries out the reaction S-ubiquitinyl-[E2 ubiquitin-conjugating enzyme]-L-cysteine + [acceptor protein]-L-lysine = [E2 ubiquitin-conjugating enzyme]-L-cysteine + N(6)-ubiquitinyl-[acceptor protein]-L-lysine.. It functions in the pathway protein modification; protein ubiquitination. Its function is as follows. E3 ubiquitin-protein ligase that promotes the ubiquitination of various substrates. In turn, participates in the regulation of many biological processes including cell cycle, apoptosis, osteoclastogenesis as well as innate or adaptive immunity. Acts as negative regulator of NF-kappa-B-dependent transcription by promoting the ubiquitination and stabilization of the NF-kappa-B inhibitor TNFAIP3. May promote the ubiquitination of TRAF6 as well. Also acts as a negative regulator of T-cell activation. Inhibits cellular dsRNA responses and interferon production by targeting MAVS component for proteasomal degradation. Ubiquitinates the CDK inhibitor CDKN1A leading to its degradationand probably also CDKN1B and CDKN1C. This activity stimulates cell cycle G1-to-S phase transition and suppresses cellular senescence. May play a role in spermatogenesis. The chain is E3 ubiquitin-protein ligase RNF114 (RNF114) from Pan troglodytes (Chimpanzee).